The following is a 339-amino-acid chain: Ketol-acid reductoisomerase (NADP(+)) (339 aa).

The 182-residue stretch at 1–182 (MRVYYDRDAD…GGGRAGVIET (182 aa)) folds into the KARI N-terminal Rossmann domain. NADP(+) is bound by residues 24–27 (YGSQ), Arg-48, Ser-51, Thr-53, and 83–86 (DELQ). His-108 is an active-site residue. An NADP(+)-binding site is contributed by Gly-134. The KARI C-terminal knotted domain occupies 183 to 328 (TFKEECETDL…KKLRSMMPWI (146 aa)). Residues Asp-191, Glu-195, Glu-227, and Glu-231 each coordinate Mg(2+). Ser-252 contacts substrate.

Belongs to the ketol-acid reductoisomerase family. Mg(2+) serves as cofactor.

It catalyses the reaction (2R)-2,3-dihydroxy-3-methylbutanoate + NADP(+) = (2S)-2-acetolactate + NADPH + H(+). The catalysed reaction is (2R,3R)-2,3-dihydroxy-3-methylpentanoate + NADP(+) = (S)-2-ethyl-2-hydroxy-3-oxobutanoate + NADPH + H(+). It functions in the pathway amino-acid biosynthesis; L-isoleucine biosynthesis; L-isoleucine from 2-oxobutanoate: step 2/4. Its pathway is amino-acid biosynthesis; L-valine biosynthesis; L-valine from pyruvate: step 2/4. Its function is as follows. Involved in the biosynthesis of branched-chain amino acids (BCAA). Catalyzes an alkyl-migration followed by a ketol-acid reduction of (S)-2-acetolactate (S2AL) to yield (R)-2,3-dihydroxy-isovalerate. In the isomerase reaction, S2AL is rearranged via a Mg-dependent methyl migration to produce 3-hydroxy-3-methyl-2-ketobutyrate (HMKB). In the reductase reaction, this 2-ketoacid undergoes a metal-dependent reduction by NADPH to yield (R)-2,3-dihydroxy-isovalerate. The polypeptide is Ketol-acid reductoisomerase (NADP(+)) (Bartonella tribocorum (strain CIP 105476 / IBS 506)).